A 60-amino-acid polypeptide reads, in one-letter code: Large ribosomal subunit protein uL30 (60 aa).

This sequence belongs to the universal ribosomal protein uL30 family. In terms of assembly, part of the 50S ribosomal subunit.

The chain is Large ribosomal subunit protein uL30 from Streptomyces coelicolor (strain ATCC BAA-471 / A3(2) / M145).